Consider the following 302-residue polypeptide: MNPTAIFDYLQGLQTRIVEAIELVDGKRFLHDSWQRAEGGGGTSCMLEEGNVFERAGIGFSHVIGNKLPPSASVAHPEAAGRSWQAMGVSLVFHPRNPYVPTVHMNVRFFVAEKPGEEPIWWFGGGMDLTPYYGFEEDAVHFHRTCRDAVAPFGEQYYPRFKKECDDYFYLKHRKEARGIGGIFFDDFNELGFEQSFAFQRSVGDAFINAYLPIVQRRKDIPYSERERDFQAYRRGRYVEFNLIYDRGTIFGLQSNGRTESILLSMPPIVKWRYDWKPEAGSPEARLYSDFITGRDWLTEHK.

Position 90 (Ser-90) interacts with substrate. 2 residues coordinate a divalent metal cation: His-94 and His-104. His-104 (proton donor) is an active-site residue. Residue 106-108 coordinates substrate; that stretch reads NVR. A divalent metal cation is bound by residues His-143 and His-173. The important for dimerization stretch occupies residues 238–273; it reads YVEFNLIYDRGTIFGLQSNGRTESILLSMPPIVKWR.

This sequence belongs to the aerobic coproporphyrinogen-III oxidase family. Homodimer. A divalent metal cation is required as a cofactor.

The protein localises to the cytoplasm. It catalyses the reaction coproporphyrinogen III + O2 + 2 H(+) = protoporphyrinogen IX + 2 CO2 + 2 H2O. Its pathway is porphyrin-containing compound metabolism; protoporphyrin-IX biosynthesis; protoporphyrinogen-IX from coproporphyrinogen-III (O2 route): step 1/1. In terms of biological role, involved in the heme biosynthesis. Catalyzes the aerobic oxidative decarboxylation of propionate groups of rings A and B of coproporphyrinogen-III to yield the vinyl groups in protoporphyrinogen-IX. This is Oxygen-dependent coproporphyrinogen-III oxidase from Methylobacillus flagellatus (strain ATCC 51484 / DSM 6875 / VKM B-1610 / KT).